A 213-amino-acid chain; its full sequence is Phosphatidylserine decarboxylase proenzyme (213 aa).

Serine 182 acts as the Schiff-base intermediate with substrate; via pyruvic acid in catalysis. Residue serine 182 is modified to Pyruvic acid (Ser); by autocatalysis.

It belongs to the phosphatidylserine decarboxylase family. PSD-A subfamily. Heterodimer of a large membrane-associated beta subunit and a small pyruvoyl-containing alpha subunit. It depends on pyruvate as a cofactor. In terms of processing, is synthesized initially as an inactive proenzyme. Formation of the active enzyme involves a self-maturation process in which the active site pyruvoyl group is generated from an internal serine residue via an autocatalytic post-translational modification. Two non-identical subunits are generated from the proenzyme in this reaction, and the pyruvate is formed at the N-terminus of the alpha chain, which is derived from the carboxyl end of the proenzyme. The post-translation cleavage follows an unusual pathway, termed non-hydrolytic serinolysis, in which the side chain hydroxyl group of the serine supplies its oxygen atom to form the C-terminus of the beta chain, while the remainder of the serine residue undergoes an oxidative deamination to produce ammonia and the pyruvoyl prosthetic group on the alpha chain.

Its subcellular location is the cell membrane. The enzyme catalyses a 1,2-diacyl-sn-glycero-3-phospho-L-serine + H(+) = a 1,2-diacyl-sn-glycero-3-phosphoethanolamine + CO2. Its pathway is phospholipid metabolism; phosphatidylethanolamine biosynthesis; phosphatidylethanolamine from CDP-diacylglycerol: step 2/2. Catalyzes the formation of phosphatidylethanolamine (PtdEtn) from phosphatidylserine (PtdSer). In Chlorobium phaeobacteroides (strain BS1), this protein is Phosphatidylserine decarboxylase proenzyme.